Here is a 623-residue protein sequence, read N- to C-terminus: Transketolase (623 aa).

M1 is modified (N-acetylmethionine). A Phosphoserine modification is found at S3. An N6-acetyllysine mark is found at K6 and K11. Residue H37 participates in substrate binding. Thiamine diphosphate-binding residues include S40 and H77. S104 carries the phosphoserine modification. Residue G123–L125 coordinates thiamine diphosphate. K144 is subject to N6-acetyllysine. D155 serves as a coordination point for Mg(2+). 2 residues coordinate thiamine diphosphate: G156 and N185. Mg(2+)-binding residues include N185 and L187. Residues K204, K232, and K241 each carry the N6-acetyllysine modification. 2 residues coordinate thiamine diphosphate: K244 and H258. H258 is a binding site for substrate. N6-acetyllysine is present on K260. Y275 is modified (phosphotyrosine). At T287 the chain carries Phosphothreonine. S295 is subject to Phosphoserine. 2 residues coordinate substrate: R318 and S345. S345 is subject to Phosphoserine. A Glycyl lysine isopeptide (Lys-Gly) (interchain with G-Cter in SUMO2) cross-link involves residue K352. The active-site Proton donor is E366. F392 lines the thiamine diphosphate pocket. Positions 416 and 424 each coordinate substrate. Residue Q428 participates in thiamine diphosphate binding. R474 contacts substrate. Residues K538 and K603 each carry the N6-acetyllysine modification.

This sequence belongs to the transketolase family. As to quaternary structure, homodimer. Mg(2+) serves as cofactor. Ca(2+) is required as a cofactor. Requires Mn(2+) as cofactor. The cofactor is Co(2+). It depends on thiamine diphosphate as a cofactor.

It carries out the reaction D-sedoheptulose 7-phosphate + D-glyceraldehyde 3-phosphate = aldehydo-D-ribose 5-phosphate + D-xylulose 5-phosphate. Catalyzes the transfer of a two-carbon ketol group from a ketose donor to an aldose acceptor, via a covalent intermediate with the cofactor thiamine pyrophosphate. This Homo sapiens (Human) protein is Transketolase (TKT).